Reading from the N-terminus, the 315-residue chain is Adenine deaminase (315 aa).

Zn(2+) contacts are provided by His-14, His-16, and His-194. The Proton donor role is filled by Glu-197. Residue Asp-275 participates in Zn(2+) binding. Residue Asp-276 participates in substrate binding.

This sequence belongs to the metallo-dependent hydrolases superfamily. Adenosine and AMP deaminases family. Adenine deaminase type 2 subfamily. It depends on Zn(2+) as a cofactor.

It catalyses the reaction adenine + H2O + H(+) = hypoxanthine + NH4(+). Functionally, catalyzes the hydrolytic deamination of adenine to hypoxanthine. Plays an important role in the purine salvage pathway and in nitrogen catabolism. This is Adenine deaminase from Pseudomonas putida (strain ATCC 47054 / DSM 6125 / CFBP 8728 / NCIMB 11950 / KT2440).